Here is a 137-residue protein sequence, read N- to C-terminus: uncharacterized protein (137 aa).

Residues 111 to 131 (LAVGVLVGSNLVVGSLVFALL) traverse the membrane as a helical segment.

It is found in the membrane. This is an uncharacterized protein from Saccharomyces cerevisiae (strain ATCC 204508 / S288c) (Baker's yeast).